Here is a 120-residue protein sequence, read N- to C-terminus: Ribosome-binding factor A (120 aa).

The protein belongs to the RbfA family. As to quaternary structure, monomer. Binds 30S ribosomal subunits, but not 50S ribosomal subunits or 70S ribosomes.

The protein resides in the cytoplasm. In terms of biological role, one of several proteins that assist in the late maturation steps of the functional core of the 30S ribosomal subunit. Associates with free 30S ribosomal subunits (but not with 30S subunits that are part of 70S ribosomes or polysomes). Required for efficient processing of 16S rRNA. May interact with the 5'-terminal helix region of 16S rRNA. The sequence is that of Ribosome-binding factor A from Chlamydia caviae (strain ATCC VR-813 / DSM 19441 / 03DC25 / GPIC) (Chlamydophila caviae).